Here is a 135-residue protein sequence, read N- to C-terminus: Small ribosomal subunit protein bS6 (135 aa).

Positions 104–135 (FSRLDRNGHIGHDEKHPRSPSRQREDVIEGVE) are disordered.

The protein belongs to the bacterial ribosomal protein bS6 family.

Binds together with bS18 to 16S ribosomal RNA. The polypeptide is Small ribosomal subunit protein bS6 (Bartonella henselae (strain ATCC 49882 / DSM 28221 / CCUG 30454 / Houston 1) (Rochalimaea henselae)).